Reading from the N-terminus, the 420-residue chain is Putative polyketide beta-ketoacyl synthase 1 (420 aa).

Residues 3–414 (QRRVAITGIE…GFQSAMVLTS (412 aa)) enclose the Ketosynthase family 3 (KS3) domain. Active-site for beta-ketoacyl synthase activity residues include C169, H307, and H344.

This sequence belongs to the thiolase-like superfamily. Beta-ketoacyl-ACP synthases family.

Its pathway is antifungal biosynthesis; monensin biosynthesis. This chain is Putative polyketide beta-ketoacyl synthase 1, found in Streptomyces virginiae (Streptomyces cinnamonensis).